Here is a 426-residue protein sequence, read N- to C-terminus: Lactate racemase (426 aa).

Residue Asp72–Arg75 coordinates Ni(II)-pyridinium-3,5-bisthiocarboxylate mononucleotide. Active-site proton donor/acceptor residues include His108 and His174. Lys184 and His200 together coordinate Ni(II)-pyridinium-3,5-bisthiocarboxylate mononucleotide. Substrate is bound by residues Gln295 and Lys298.

This sequence belongs to the lactate racemase family. In terms of assembly, homodimer. Ni(II)-pyridinium-3,5-bisthiocarboxylate mononucleotide serves as cofactor.

It carries out the reaction (S)-lactate = (R)-lactate. Activation of the apo-enzyme requires the three accessory proteins LarB, LarE and LarC, that are involved in the biosynthesis of the nickel-pincer cofactor of LarA. Its function is as follows. Catalyzes the interconversion between the D- and L-isomers of lactate. This is Lactate racemase from Thermoanaerobacterium thermosaccharolyticum (strain ATCC 7956 / DSM 571 / NCIMB 9385 / NCA 3814 / NCTC 13789 / WDCM 00135 / 2032) (Clostridium thermosaccharolyticum).